Consider the following 208-residue polypeptide: Na(+)-translocating NADH-quinone reductase subunit D (208 aa).

Transmembrane regions (helical) follow at residues 42 to 62 (IVMTFAVIFVTAFSNLFISLI), 70 to 90 (VRIIVQMAIIASLVILVDQIL), 103 to 123 (VFVGLIITNCIVMGRAEAFAM), 131 to 151 (FVDGIGNGLGYGAILVSVAFI), and 178 to 198 (NGLFLLAPSAFFIIGFIIWGI).

The protein belongs to the NqrDE/RnfAE family. As to quaternary structure, composed of six subunits; NqrA, NqrB, NqrC, NqrD, NqrE and NqrF.

Its subcellular location is the cell inner membrane. The catalysed reaction is a ubiquinone + n Na(+)(in) + NADH + H(+) = a ubiquinol + n Na(+)(out) + NAD(+). Its function is as follows. NQR complex catalyzes the reduction of ubiquinone-1 to ubiquinol by two successive reactions, coupled with the transport of Na(+) ions from the cytoplasm to the periplasm. NqrA to NqrE are probably involved in the second step, the conversion of ubisemiquinone to ubiquinol. The sequence is that of Na(+)-translocating NADH-quinone reductase subunit D from Pasteurella multocida (strain Pm70).